The chain runs to 1055 residues: Focal adhesion kinase 1 (1055 aa).

The segment at 1–29 (MAAAYLDPNLNHTPSSSTKTHLGTGTERS) is disordered. Residue A2 is modified to N-acetylalanine. At Y5 the chain carries Phosphotyrosine. A compositionally biased stretch (polar residues) spans 10–27 (LNHTPSSSTKTHLGTGTE). T13 bears the Phosphothreonine mark. S29 and S54 each carry phosphoserine. The FERM domain maps to 35 to 355 (RVLKVFHYFE…GYCRLVNGAT (321 aa)). K152 is covalently cross-linked (Glycyl lysine isopeptide (Lys-Gly) (interchain with G-Cter in SUMO)). Y397 carries the phosphotyrosine; by autocatalysis modification. Residue Y407 is modified to Phosphotyrosine. A Protein kinase domain is found at 422–680 (IELGRCIGEG…ELKAQLSTIL (259 aa)). ATP contacts are provided by residues 428 to 434 (IGEGQFG), K454, and 500 to 502 (ELC). Catalysis depends on D546, which acts as the Proton acceptor. Y570 and Y576 each carry phosphotyrosine. At Y577 the chain carries Phosphotyrosine; by RET and SRC. A Phosphoserine modification is found at S580. The segment covering 685–697 (VQQEERMRMESRR) has biased composition (basic and acidic residues). Disordered stretches follow at residues 685 to 734 (VQQE…PSPQ) and 837 to 923 (VRLS…LDRS). The interval 707–1055 (GSDEAPPKPS…LKMLGQTRPH (349 aa)) is interaction with TGFB1I1. S722 is subject to Phosphoserine. S732 carries the post-translational modification Phosphoserine; by CDK5. Residues 837–849 (VRLSRGSIDREDG) show a composition bias toward basic and acidic residues. Residue S843 is modified to Phosphoserine. Y861 is modified (phosphotyrosine). Positions 869–880 (PAAPPKKPPRPG) are enriched in pro residues. The segment covering 886–896 (SNLSSISSPAE) has biased composition (polar residues). At S913 the chain carries Phosphoserine. Residues 915-1055 (PPTANLDRSN…LKMLGQTRPH (141 aa)) are interaction with ARHGEF28. A Phosphothreonine modification is found at T917. A Phosphotyrosine modification is found at Y928.

The protein belongs to the protein kinase superfamily. Tyr protein kinase family. FAK subfamily. As to quaternary structure, interacts with GIT1. Component of a complex that contains at least FER, CTTN and PTK2/FAK1. Interacts with BMX. Interacts with STEAP4. Interacts with ZFYVE21. Interacts with ESR1. Interacts with PIK3R1 or PIK3R2. Interacts with FGR, FLT4 and RET. Interacts with EPHA2 in resting cells; activation of EPHA2 recruits PTPN11, leading to dephosphorylation of PTK2/FAK1 and dissociation of the complex. Interacts with EPHA1 (kinase activity-dependent). Interacts with P53/TP53. Interacts (via first Pro-rich region) with CAS family members (via SH3 domain), including BCAR1, BCAR3, and CASS4. Interacts with NEDD9 (via SH3 domain). Interacts with TGFB1I1. Interacts with SRC, GRB2 and GRB7. Interacts with ARHGEF28. Interacts with SHB. Part of a complex composed of THSD1, PTK2/FAK1, TLN1 and VCL. Interacts with PXN and TLN1. Interacts with SORBS1. Interacts with STAT1. Interacts with WASL. Interacts with ARHGAP26 and SHC1. Interacts with RB1CC1; this inhibits PTK2/FAK1 activity and activation of downstream signaling pathways. Interacts with ARHGEF7. Interacts with MDM2. Interacts with PIAS1. Interacts with DCC. Interacts with LPXN (via LD motif 3). Interacts with MISP. Interacts with EMP2; regulates PTK2 activation and localization. Interacts with DSCAM. Interacts with AMBRA1. Interacts (when tyrosine-phosphorylated) with tensin TNS1; the interaction is increased by phosphorylation of TNS1. In terms of processing, phosphorylated on tyrosine residues upon activation, e.g. upon integrin signaling. Tyr-397 is the major autophosphorylation site, but other kinases can also phosphorylate this residue. Phosphorylation at Tyr-397 promotes interaction with SRC and SRC family members, leading to phosphorylation at Tyr-576, Tyr-577 and at additional tyrosine residues. FGR promotes phosphorylation at Tyr-397 and Tyr-576. FER promotes phosphorylation at Tyr-577, Tyr-861 and Tyr-928, even when cells are not adherent. Tyr-397, Tyr-576 and Ser-722 are phosphorylated only when cells are adherent. Phosphorylation at Tyr-397 is important for interaction with BMX, PIK3R1 and SHC1. Phosphorylation at Tyr-928 is important for interaction with GRB2. Dephosphorylated by PTPN11; PTPN11 is recruited to PTK2 via EPHA2 (tyrosine phosphorylated). Microtubule-induced dephosphorylation at Tyr-397 is crucial for the induction of focal adhesion disassembly; this dephosphorylation could be catalyzed by PTPN11 and regulated by ZFYVE21. Phosphorylation on tyrosine residues is enhanced by NTN1. Sumoylated; this enhances autophosphorylation.

The protein resides in the cell junction. The protein localises to the focal adhesion. It is found in the cell membrane. It localises to the cytoplasm. Its subcellular location is the perinuclear region. The protein resides in the cell cortex. The protein localises to the cytoskeleton. It is found in the microtubule organizing center. It localises to the centrosome. Its subcellular location is the nucleus. The protein resides in the cilium basal body. It carries out the reaction L-tyrosyl-[protein] + ATP = O-phospho-L-tyrosyl-[protein] + ADP + H(+). With respect to regulation, subject to autoinhibition, mediated by interactions between the FERM domain and the kinase domain. Activated by autophosphorylation at Tyr-397. This promotes interaction with SRC and phosphorylation at Tyr-576 and Tyr-577 in the kinase activation loop by SRC. Phosphorylation at Tyr-397, Tyr-576 and Tyr-577 is required for maximal kinase activity. Functionally, non-receptor protein-tyrosine kinase that plays an essential role in regulating cell migration, adhesion, spreading, reorganization of the actin cytoskeleton, formation and disassembly of focal adhesions and cell protrusions, cell cycle progression, cell proliferation and apoptosis. Required for early embryonic development and placenta development. Required for embryonic angiogenesis, normal cardiomyocyte migration and proliferation, and normal heart development. Regulates axon growth and neuronal cell migration, axon branching and synapse formation; required for normal development of the nervous system. Plays a role in osteogenesis and differentiation of osteoblasts. Functions in integrin signal transduction, but also in signaling downstream of numerous growth factor receptors, G-protein coupled receptors (GPCR), EPHA2, netrin receptors and LDL receptors. Forms multisubunit signaling complexes with SRC and SRC family members upon activation; this leads to the phosphorylation of additional tyrosine residues, creating binding sites for scaffold proteins, effectors and substrates. Regulates numerous signaling pathways. Promotes activation of phosphatidylinositol 3-kinase and the AKT1 signaling cascade. Promotes activation of MAPK1/ERK2, MAPK3/ERK1 and the MAP kinase signaling cascade. Promotes localized and transient activation of guanine nucleotide exchange factors (GEFs) and GTPase-activating proteins (GAPs), and thereby modulates the activity of Rho family GTPases. Signaling via CAS family members mediates activation of RAC1. Phosphorylates NEDD9 following integrin stimulation. Recruits the ubiquitin ligase MDM2 to P53/TP53 in the nucleus, and thereby regulates P53/TP53 activity, P53/TP53 ubiquitination and proteasomal degradation. Phosphorylates SRC; this increases SRC kinase activity. Phosphorylates ACTN1, ARHGEF7, GRB7, RET and WASL. Promotes phosphorylation of PXN and STAT1; most likely PXN and STAT1 are phosphorylated by a SRC family kinase that is recruited to autophosphorylated PTK2/FAK1, rather than by PTK2/FAK1 itself. Promotes phosphorylation of BCAR1; GIT2 and SHC1; this requires both SRC and PTK2/FAK1. Promotes phosphorylation of BMX and PIK3R1. Its function is as follows. Does not contain a kinase domain and inhibits PTK2/FAK1 phosphorylation and signaling. Its enhanced expression can attenuate the nuclear accumulation of LPXN and limit its ability to enhance serum response factor (SRF)-dependent gene transcription. In Rattus norvegicus (Rat), this protein is Focal adhesion kinase 1.